The following is a 662-amino-acid chain: LIM domain kinase 1 (662 aa).

LIM zinc-binding domains are found at residues 24–83 (PVCA…RFGE) and 84–145 (LCHG…MVVT). One can recognise a PDZ domain in the interval 166–259 (LVSIPACSDG…LLQLTIEHDP (94 aa)). Positions 262–328 (PLPRDLALPC…ASQRKDIGRS (67 aa)) are disordered. Residues 272–287 (SPLPDPHSPLRSPVPA) show a composition bias toward pro residues. Over residues 309–320 (SPGSSSVGSPAS) the composition is skewed to low complexity. Positions 346–611 (LIHGEVLGKG…PSFSKLEQWL (266 aa)) constitute a Protein kinase domain. ATP is bound by residues 352 to 360 (LGKGCFGQA) and lysine 375. Aspartate 467 is a catalytic residue.

The protein belongs to the protein kinase superfamily. TKL Ser/Thr protein kinase family. Expressed predominantly in the brain.

The protein resides in the cytoplasm. The protein localises to the nucleus. It is found in the cytoskeleton. It localises to the cell projection. Its subcellular location is the growth cone. It carries out the reaction L-seryl-[protein] + ATP = O-phospho-L-seryl-[protein] + ADP + H(+). It catalyses the reaction L-threonyl-[protein] + ATP = O-phospho-L-threonyl-[protein] + ADP + H(+). Functionally, protein kinase which regulates actin filament dynamics. Phosphorylates and inactivates the actin binding/depolymerizing factor cofilin, thereby stabilizing the actin cytoskeleton. Required for motility of the axon growth cone. The protein is LIM domain kinase 1 (LIMK1) of Gallus gallus (Chicken).